Here is a 969-residue protein sequence, read N- to C-terminus: Dual serine/threonine and tyrosine protein kinase (969 aa).

The stretch at 7 to 37 (QEFRRYLRNRNQLQHVLEETQQALELINLEN) forms a coiled coil. The Protein kinase domain occupies 632–894 (PHCAEEIGRG…PLLGAIVPVL (263 aa)). ATP-binding positions include 638-646 (IGRGQYGIV) and lysine 662. Catalysis depends on aspartate 760, which acts as the Proton acceptor. Residues 904-945 (SKSLQEVSSDKLQESSTDSRNPALALAEPYNQRGTVVSPPPT) are disordered.

It belongs to the protein kinase superfamily. Ser/Thr protein kinase family.

It is found in the cytoplasm. It catalyses the reaction L-seryl-[protein] + ATP = O-phospho-L-seryl-[protein] + ADP + H(+). The catalysed reaction is L-threonyl-[protein] + ATP = O-phospho-L-threonyl-[protein] + ADP + H(+). It carries out the reaction L-tyrosyl-[protein] + ATP = O-phospho-L-tyrosyl-[protein] + ADP + H(+). The sequence is that of Dual serine/threonine and tyrosine protein kinase from Apis mellifera (Honeybee).